Reading from the N-terminus, the 483-residue chain is Glycogen synthase (483 aa).

Lysine 15 is a binding site for ADP-alpha-D-glucose.

It belongs to the glycosyltransferase 1 family. Bacterial/plant glycogen synthase subfamily.

The catalysed reaction is [(1-&gt;4)-alpha-D-glucosyl](n) + ADP-alpha-D-glucose = [(1-&gt;4)-alpha-D-glucosyl](n+1) + ADP + H(+). The protein operates within glycan biosynthesis; glycogen biosynthesis. Its function is as follows. Synthesizes alpha-1,4-glucan chains using ADP-glucose. The protein is Glycogen synthase of Petrotoga mobilis (strain DSM 10674 / SJ95).